Reading from the N-terminus, the 800-residue chain is Signaling protein YkoW (800 aa).

The next 7 helical transmembrane spans lie at 5–27, 44–66, 76–98, 103–125, 135–157, 178–200, and 215–237; these read VTYNTTLICLSILIACTASYISL, WLIGGSLIMGFGIWSMHFVGMMA, EFMPLMAAIGASVSGSFVSLYFV, LTYYRLLTGSVVLGASIASMHYI, IIYEPILFTVSIIIAIAASFVSL, VSSIVMGIGISGMHYTGMLAATF, and TFHWSIFVTLIIFCIQTLLLFSS. In terms of domain architecture, MHYT spans 7–201; that stretch reads YNTTLICLSI…YTGMLAATFH (195 aa). In terms of domain architecture, PAS spans 255–319; it reads QRFQSLIVHN…FEQVKKDKQA (65 aa). The region spanning 402–536 is the GGDEF domain; that stretch reads YNTVVFFLDL…NKSKYRYYSF (135 aa). Residues 545-798 form the EAL domain; it reads KLNQEMVLRE…QFEQFIIEQP (254 aa).

Its subcellular location is the cell membrane. Functionally, probable signaling protein whose physiological role is not yet known. In Bacillus subtilis (strain 168), this protein is Signaling protein YkoW (ykoW).